Consider the following 464-residue polypeptide: Splicing factor 3A subunit 2 (464 aa).

Met-1 is modified (N-acetylmethionine). The disordered stretch occupies residues 1 to 27 (MDFQHRPGGKTGSGGVASSSESNRDRR). Lys-10 carries the post-translational modification N6-acetyllysine. The segment at 54–84 (YECKLCLTLHNNEGSYLAHTQGKKHQTNLAR) adopts a Matrin-type zinc-finger fold. At Ser-153 the chain carries Phosphoserine. 3 stretches are compositionally biased toward pro residues: residues 217-295 (PPAP…PVVH), 303-323 (PPAP…PGVH), and 331-369 (PPAP…PPPS). Positions 217 to 464 (PPAPPSLPAG…GNIPPPPPTN (248 aa)) are disordered. Low complexity predominate over residues 370–392 (AGVHPQAPGVHPAAPAVHPQAPG). Residues 435-464 (VHPPTPMPPMLRPPLPSEGPGNIPPPPPTN) are compositionally biased toward pro residues.

This sequence belongs to the SF3A2 family. As to quaternary structure, component of the 17S U2 SnRNP complex, a ribonucleoprotein complex that contains small nuclear RNA (snRNA) U2 and a number of specific proteins. Part of the SF3A subcomplex of the 17S U2 SnRNP complex which is composed of three subunits; SF3A3/SAP61, SF3A2/SAP62 and SF3A1/SAP114. SF3A associates with the splicing factor SF3B and a 12S RNA unit to form the mature 17S U2 small nuclear ribonucleoprotein complex (17S U2 snRNP). Identified in the spliceosome 'E' complex, a precursor of the spliceosome 'A' complex. Identified in the spliceosome 'A' and 'B' complexes. Identified in the spliceosome 'C' complex. Interacts with HTATSF1.

The protein localises to the nucleus. Its function is as follows. Component of the 17S U2 SnRNP complex of the spliceosome, a large ribonucleoprotein complex that removes introns from transcribed pre-mRNAs. The 17S U2 SnRNP complex (1) directly participates in early spliceosome assembly and (2) mediates recognition of the intron branch site during pre-mRNA splicing by promoting the selection of the pre-mRNA branch-site adenosine, the nucleophile for the first step of splicing. Within the 17S U2 SnRNP complex, SF3A2 is part of the SF3A subcomplex that contributes to the assembly of the 17S U2 snRNP, and the subsequent assembly of the pre-spliceosome 'E' complex and the pre-catalytic spliceosome 'A' complex. Involved in pre-mRNA splicing as a component of pre-catalytic spliceosome 'B' complexes, including the Bact complex. Interacts directly with the duplex formed by U2 snRNA and the intron. The sequence is that of Splicing factor 3A subunit 2 (SF3A2) from Homo sapiens (Human).